We begin with the raw amino-acid sequence, 60 residues long: Large ribosomal subunit protein uL30 (60 aa).

It belongs to the universal ribosomal protein uL30 family. As to quaternary structure, part of the 50S ribosomal subunit.

The protein is Large ribosomal subunit protein uL30 of Streptomyces coelicolor (strain ATCC BAA-471 / A3(2) / M145).